The chain runs to 423 residues: Haloacid dehalogenase-like hydrolase domain-containing 5 (423 aa).

The signal sequence occupies residues 1-23; that stretch reads MAAWGCVAALGAARGLCWRAARA.

Belongs to the HAD-like hydrolase superfamily. As to expression, widely expressed.

This chain is Haloacid dehalogenase-like hydrolase domain-containing 5, found in Homo sapiens (Human).